A 71-amino-acid polypeptide reads, in one-letter code: uncharacterized protein (71 aa).

Residues G12–T34 traverse the membrane as a helical segment.

The protein resides in the membrane. This is an uncharacterized protein from Dictyostelium discoideum (Social amoeba).